A 209-amino-acid chain; its full sequence is Pyridoxal phosphate homeostasis protein (209 aa).

Lys-31 is modified (N6-(pyridoxal phosphate)lysine).

Belongs to the pyridoxal phosphate-binding protein YggS/PROSC family.

Its function is as follows. Pyridoxal 5'-phosphate (PLP)-binding protein, which is involved in PLP homeostasis. The polypeptide is Pyridoxal phosphate homeostasis protein (Deinococcus radiodurans (strain ATCC 13939 / DSM 20539 / JCM 16871 / CCUG 27074 / LMG 4051 / NBRC 15346 / NCIMB 9279 / VKM B-1422 / R1)).